The following is an 84-amino-acid chain: GTP cyclohydrolase 1 feedback regulatory protein (84 aa).

This sequence belongs to the GFRP family. Homopentamer. Forms a complex with GCH1 where a GCH1 homodecamer is sandwiched by two GFRP homopentamers.

Its subcellular location is the nucleus. The protein resides in the nucleus membrane. It is found in the cytoplasm. It localises to the cytosol. Its function is as follows. Mediates tetrahydrobiopterin inhibition of GTP cyclohydrolase 1. This is GTP cyclohydrolase 1 feedback regulatory protein (gchfr) from Xenopus tropicalis (Western clawed frog).